We begin with the raw amino-acid sequence, 396 residues long: Bifunctional enzyme Fae/Hps (396 aa).

The tract at residues 1-161 is formaldehyde-activating enzyme; sequence MMLIGEALIG…HEKDRAAHAV (161 aa). Residue His-17 is the Proton donor of the active site. Substrate-binding residues include Asp-19, Leu-48, Lys-66, Thr-68, and Gln-83. A 3-hexulose-6-phosphate synthase region spans residues 162 to 396; the sequence is MGFKISKLWD…IDQFRIMTDF (235 aa).

It in the N-terminal section; belongs to the formaldehyde-activating enzyme family. This sequence in the C-terminal section; belongs to the HPS/KGPDC family. HPS subfamily.

It catalyses the reaction 5,6,7,8-tetrahydromethanopterin + formaldehyde = 5,10-methylenetetrahydromethanopterin + H2O. It carries out the reaction D-ribulose 5-phosphate + formaldehyde = D-arabino-hex-3-ulose 6-phosphate. Its pathway is carbohydrate biosynthesis; D-ribose 5-phosphate biosynthesis. In terms of biological role, catalyzes the condensation of formaldehyde with tetrahydromethanopterin (H(4)MPT) to 5,10-methylenetetrahydromethanopterin. Catalyzes the reversible formation of ribulose-5-phosphate and formaldehyde from 3-hexulose-6-phosphate. The polypeptide is Bifunctional enzyme Fae/Hps (Methanococcoides burtonii (strain DSM 6242 / NBRC 107633 / OCM 468 / ACE-M)).